The following is a 339-amino-acid chain: NADP-dependent dehydrogenase M3 (339 aa).

7 residues coordinate NADP(+): serine 49, isoleucine 51, aspartate 93, tyrosine 206, lysine 210, isoleucine 240, and glutamine 244. The active-site Proton acceptor is tyrosine 206. The active-site Lowers pKa of active site Tyr is the lysine 210.

The protein belongs to the short-chain dehydrogenases/reductases (SDR) family. Homodimer.

It is found in the cytoplasm. Its subcellular location is the cytosol. It functions in the pathway secondary metabolite biosynthesis. In terms of biological role, NADP-dependent dehydrogenase; part of the gene cluster that mediates the biosynthesis of squalestatin S1 (SQS1, also known as zaragozic acid A), a heavily oxidized fungal polyketide that offers potent cholesterol lowering activity by targeting squalene synthase (SS). SQS1 is composed of a 2,8-dioxobicyclic[3.2.1]octane-3,4,5-tricarboxyclic acid core that is connected to two lipophilic polyketide arms. These initial steps feature the priming of an unusual benzoic acid starter unit onto the highly reducing polyketide synthase pks2, followed by oxaloacetate extension and product release to generate a tricarboxylic acid containing product. The phenylalanine ammonia lyase (PAL) M7 and the acyl-CoA ligase M9 are involved in transforming phenylalanine into benzoyl-CoA. The citrate synthase-like protein R3 is involved in connecting the C-alpha-carbons of the hexaketide chain and oxaloacetate to afford the tricarboxylic acid unit. The potential hydrolytic enzymes, M8 and M10, are in close proximity to pks2 and may participate in product release. On the other side, the tetraketide arm is synthesized by a the squalestatin tetraketide synthase pks1 and enzymatically esterified to the core in the last biosynthetic step, by the acetyltransferase M4. The biosynthesis of the tetraketide must involve 3 rounds of chain extension. After the first and second rounds methyl-transfer occurs, and in all rounds of extension the ketoreductase and dehydratase are active. The enoyl reductase and C-MeT of pks1 are not active in the final round of extension. The acetyltransferase M4 appears to have a broad substrate selectivity for its acyl CoA substrate, allowing the in vitro synthesis of novel squalestatins. The biosynthesis of SQS1 requires several oxidative steps likely performed by oxidoreductases M1, R1 and R2. Finally, in support of the identification of the cluster as being responsible for SQS1 production, the cluster contains a gene encoding a putative squalene synthase (SS) R6, suggesting a likely mechanism for self-resistance. The protein is NADP-dependent dehydrogenase M3 of Phoma sp. (strain ATCC 20986 / MF5453).